Reading from the N-terminus, the 343-residue chain is Protein-glutamate methylesterase/protein-glutamine glutaminase 2 (343 aa).

In terms of domain architecture, Response regulatory spans 5 to 122 (KVLVVDDSAI…SVGDMSGQLV (118 aa)). At Asp56 the chain carries 4-aspartylphosphate. One can recognise a CheB-type methylesterase domain in the interval 154–343 (AETSNKVIAI…SIADEIVRMV (190 aa)). Residues Ser166, His192, and Asp288 contribute to the active site.

Belongs to the CheB family. Post-translationally, phosphorylated by CheA. Phosphorylation of the N-terminal regulatory domain activates the methylesterase activity.

Its subcellular location is the cytoplasm. It catalyses the reaction [protein]-L-glutamate 5-O-methyl ester + H2O = L-glutamyl-[protein] + methanol + H(+). The catalysed reaction is L-glutaminyl-[protein] + H2O = L-glutamyl-[protein] + NH4(+). Functionally, involved in chemotaxis. Part of a chemotaxis signal transduction system that modulates chemotaxis in response to various stimuli. Catalyzes the demethylation of specific methylglutamate residues introduced into the chemoreceptors (methyl-accepting chemotaxis proteins or MCP) by CheR. Also mediates the irreversible deamidation of specific glutamine residues to glutamic acid. This is Protein-glutamate methylesterase/protein-glutamine glutaminase 2 from Syntrophus aciditrophicus (strain SB).